The following is a 685-amino-acid chain: E3 ubiquitin ligase Rnf157 (685 aa).

G2 carries N-myristoyl glycine lipidation. The RING-type zinc finger occupies 276–315; it reads ECVVCLSDVRDTLILPCRHLCLCNTCADTLRYQANNCPIC. A D-box 1 motif is present at residues 329-332; that stretch reads RKKL. 3 disordered regions span residues 339 to 361, 433 to 584, and 650 to 672; these read SFNP…ENIP, LSKS…AGEQ, and LGGR…EASA. Low complexity predominate over residues 434-443; that stretch reads SKSISQNSSV. The segment covering 478–537 has biased composition (polar residues); the sequence is ESENLTLSSSGAVDQSSCTGTPLSSTISSPEDPASSSLAQSVMSMASSQISTDTVSSMSG. The segment covering 552-561 has biased composition (low complexity); sequence PSPRAASRAP. The short motif at 657–660 is the D-box 2 element; sequence ARPR.

Interacts with APBB1. Interacts with CHD1; CHD1-binding controls RNF157 stability. Also interacts with ATRN, MEGF8, TECR, MSI2, PLRG1, BYSL, MTERF3, PSMA1, MRPS18B, PRPF4, FASTKD2, SLC25A1, SMU1, CNOT9, MRPS2, MAGT1, FXR2, EMD, PSMD8, HDAC1, RAN, HSD17B12, TXNDC5 and MRPL19.

The protein localises to the cytoplasm. The catalysed reaction is S-ubiquitinyl-[E2 ubiquitin-conjugating enzyme]-L-cysteine + [acceptor protein]-L-lysine = [E2 ubiquitin-conjugating enzyme]-L-cysteine + N(6)-ubiquitinyl-[acceptor protein]-L-lysine.. Its function is as follows. E3 ubiquitin ligase that ubiquitinates APBB1 for its degradation by the proteasome and thus prevents apoptosis and promotes survival of neurons. Has a dual role in neurons as it is also required for dendrite growth and maintenance for which its ligase activity is not critical. May act as a scaffold molecule to regulate this process. Acts as a downstream effector of the interconnected PI3K and MAPK signaling pathways and thus participates in the regulation of the cell cycle. This chain is E3 ubiquitin ligase Rnf157 (Rnf157), found in Mus musculus (Mouse).